A 509-amino-acid polypeptide reads, in one-letter code: ATP synthase subunit beta (509 aa).

The tract at residues 1–28 (MAKAATPKETAAAKKPAAPKKAASAKTA) is disordered. 187–194 (GGAGVGKT) is a binding site for ATP.

It belongs to the ATPase alpha/beta chains family. As to quaternary structure, F-type ATPases have 2 components, CF(1) - the catalytic core - and CF(0) - the membrane proton channel. CF(1) has five subunits: alpha(3), beta(3), gamma(1), delta(1), epsilon(1). CF(0) has three main subunits: a(1), b(2) and c(9-12). The alpha and beta chains form an alternating ring which encloses part of the gamma chain. CF(1) is attached to CF(0) by a central stalk formed by the gamma and epsilon chains, while a peripheral stalk is formed by the delta and b chains.

It is found in the cell inner membrane. The catalysed reaction is ATP + H2O + 4 H(+)(in) = ADP + phosphate + 5 H(+)(out). In terms of biological role, produces ATP from ADP in the presence of a proton gradient across the membrane. The catalytic sites are hosted primarily by the beta subunits. In Sinorhizobium medicae (strain WSM419) (Ensifer medicae), this protein is ATP synthase subunit beta.